A 566-amino-acid chain; its full sequence is Probable F-box protein At5g39490 (566 aa).

Residues 8 to 54 enclose the F-box domain; that stretch reads ACLLLMLPEDIFVVISRFLSPSDICNLILCGKSLRALVDSEKTWLVQ. The segment at 318 to 338 is disordered; sequence LRKSSSSKNTTPSQSEIRHSN. The span at 320–332 shows a compositional bias: low complexity; the sequence is KSSSSKNTTPSQS.

The protein is Probable F-box protein At5g39490 of Arabidopsis thaliana (Mouse-ear cress).